We begin with the raw amino-acid sequence, 377 residues long: Queuine tRNA-ribosyltransferase (377 aa).

The active-site Proton acceptor is the Asp94. Residues 94-98 (DSGGF), Asp148, Gln191, and Gly218 contribute to the substrate site. Residues 249–255 (GVGTPDD) form an RNA binding region. Asp268 acts as the Nucleophile in catalysis. Positions 273-277 (TRAGR) are RNA binding; important for wobble base 34 recognition.

This sequence belongs to the queuine tRNA-ribosyltransferase family. In terms of assembly, homodimer. Within each dimer, one monomer is responsible for RNA recognition and catalysis, while the other monomer binds to the replacement base PreQ1.

The enzyme catalyses 7-aminomethyl-7-carbaguanine + guanosine(34) in tRNA = 7-aminomethyl-7-carbaguanosine(34) in tRNA + guanine. It participates in tRNA modification; tRNA-queuosine biosynthesis. In terms of biological role, catalyzes the base-exchange of a guanine (G) residue with the queuine precursor 7-aminomethyl-7-deazaguanine (PreQ1) at position 34 (anticodon wobble position) in tRNAs with GU(N) anticodons (tRNA-Asp, -Asn, -His and -Tyr). Catalysis occurs through a double-displacement mechanism. The nucleophile active site attacks the C1' of nucleotide 34 to detach the guanine base from the RNA, forming a covalent enzyme-RNA intermediate. The proton acceptor active site deprotonates the incoming PreQ1, allowing a nucleophilic attack on the C1' of the ribose to form the product. After dissociation, two additional enzymatic reactions on the tRNA convert PreQ1 to queuine (Q), resulting in the hypermodified nucleoside queuosine (7-(((4,5-cis-dihydroxy-2-cyclopenten-1-yl)amino)methyl)-7-deazaguanosine). This Brucella melitensis biotype 1 (strain ATCC 23456 / CCUG 17765 / NCTC 10094 / 16M) protein is Queuine tRNA-ribosyltransferase.